The primary structure comprises 291 residues: Probable cell wall amidase LytH (291 aa).

The signal sequence occupies residues 1–40 (MKKFNDWLEKHNLRNIPTLIVVVAFVLFVFMTIAFLNHND). The region spanning 41–105 (EDSSTIYITE…WVAGWHTNLN (65 aa)) is the SH3b domain. Positions 109 to 146 (DKNPNAKPLKDKTIVLDPGHGGSDQGASSNTHKKSKEK) are disordered. One can recognise a MurNAc-LAA domain in the interval 122-286 (IVLDPGHGGS…VEQAIVEGLR (165 aa)).

Belongs to the N-acetylmuramoyl-L-alanine amidase 3 family.

It is found in the secreted. In terms of biological role, probably involved in cell-wall metabolism. This chain is Probable cell wall amidase LytH (lytH), found in Staphylococcus saprophyticus subsp. saprophyticus (strain ATCC 15305 / DSM 20229 / NCIMB 8711 / NCTC 7292 / S-41).